The primary structure comprises 353 residues: Nicotinate-nucleotide--dimethylbenzimidazole phosphoribosyltransferase (353 aa).

Glu-319 serves as the catalytic Proton acceptor.

The protein belongs to the CobT family.

The enzyme catalyses 5,6-dimethylbenzimidazole + nicotinate beta-D-ribonucleotide = alpha-ribazole 5'-phosphate + nicotinate + H(+). It functions in the pathway nucleoside biosynthesis; alpha-ribazole biosynthesis; alpha-ribazole from 5,6-dimethylbenzimidazole: step 1/2. In terms of biological role, catalyzes the synthesis of alpha-ribazole-5'-phosphate from nicotinate mononucleotide (NAMN) and 5,6-dimethylbenzimidazole (DMB). The sequence is that of Nicotinate-nucleotide--dimethylbenzimidazole phosphoribosyltransferase from Chlorobaculum tepidum (strain ATCC 49652 / DSM 12025 / NBRC 103806 / TLS) (Chlorobium tepidum).